The sequence spans 411 residues: MKKGKCVIFIIDGLGDRPNEKGLTPLKEAKTPTMDKIAKEGICGLMNAIDIGIRPGSDTAHLAILGYNPYEVYTGRGPLEAFGVGLDLKEGDIAFRCNFATVDENFVVLDRRAGRISPEEAEELEKEIDGLEIDGVKVIFKSSKGYRGALVLRGEGLSCRVSDGDPHEEGVKVSEIKPLDDSEEAKRTAEILNKLLKIVYEKLNNHPINEERRKKGLPPANIILPRGAGVVPKIEKFSEKYNMKGACICGTGLIKGMAKMIGLDVIEVEGATGTPKTNFMGKAKALVEALKEYDFVLVNVKGADEASHDGNYELKKEVLEKIDEMLAYVFEHINKDEVYFVLTGDHSTPIEMKDHSADPIPIVIWGKSVRVDDVTEFNEFACAKGALHWIKGEHVMKILLDLTGRNEKFGA.

The protein belongs to the BPG-independent phosphoglycerate mutase family. A-PGAM subfamily. Homotetramer. Requires Mg(2+) as cofactor.

The catalysed reaction is (2R)-2-phosphoglycerate = (2R)-3-phosphoglycerate. The protein operates within carbohydrate degradation; glycolysis; pyruvate from D-glyceraldehyde 3-phosphate: step 3/5. Its activity is regulated as follows. Inhibited to approximately 20% by EDTA. In terms of biological role, catalyzes the interconversion of 2-phosphoglycerate and 3-phosphoglycerate. The protein is 2,3-bisphosphoglycerate-independent phosphoglycerate mutase 1 (apgM1) of Methanocaldococcus jannaschii (strain ATCC 43067 / DSM 2661 / JAL-1 / JCM 10045 / NBRC 100440) (Methanococcus jannaschii).